Here is a 287-residue protein sequence, read N- to C-terminus: Thymidylate synthase (287 aa).

Arg21 is a dUMP binding site. Asn51 contributes to the (6R)-5,10-methylene-5,6,7,8-tetrahydrofolate binding site. Residue 150-151 (RR) participates in dUMP binding. The Nucleophile role is filled by Cys170. Residues 190–193 (RSGD), Asn201, and 231–233 (HIY) each bind dUMP. (6R)-5,10-methylene-5,6,7,8-tetrahydrofolate is bound at residue Asp193. Position 286 (Ala286) interacts with (6R)-5,10-methylene-5,6,7,8-tetrahydrofolate.

This sequence belongs to the thymidylate synthase family. Bacterial-type ThyA subfamily. Homodimer.

It localises to the cytoplasm. The enzyme catalyses dUMP + (6R)-5,10-methylene-5,6,7,8-tetrahydrofolate = 7,8-dihydrofolate + dTMP. It functions in the pathway pyrimidine metabolism; dTTP biosynthesis. Its function is as follows. Catalyzes the reductive methylation of 2'-deoxyuridine-5'-monophosphate (dUMP) to 2'-deoxythymidine-5'-monophosphate (dTMP) while utilizing 5,10-methylenetetrahydrofolate (mTHF) as the methyl donor and reductant in the reaction, yielding dihydrofolate (DHF) as a by-product. This enzymatic reaction provides an intracellular de novo source of dTMP, an essential precursor for DNA biosynthesis. The polypeptide is Thymidylate synthase (Mycoplasma genitalium (strain ATCC 33530 / DSM 19775 / NCTC 10195 / G37) (Mycoplasmoides genitalium)).